The chain runs to 216 residues: Protein Syd (216 aa).

It belongs to the Syd family.

The protein localises to the cell inner membrane. Functionally, interacts with the SecY protein in vivo. May bind preferentially to an uncomplexed state of SecY, thus functioning either as a chelating agent for excess SecY in the cell or as a regulatory factor that negatively controls the translocase function. The polypeptide is Protein Syd (Shewanella sp. (strain MR-7)).